Consider the following 173-residue polypeptide: RxLR effector protein PITG_10232 (173 aa).

Positions 1 to 24 (MRLGYLIVGCAVALLATTDGVVDA) are cleaved as a signal peptide. Positions 25–64 (SSKHKQLSTDVPRPADDISSERFLRSQDTPEDDGNPAHED) are disordered. The segment covering 37 to 49 (RPADDISSERFLR) has biased composition (basic and acidic residues). The RxLR-dEER motif lies at 46–65 (RFLRSQDTPEDDGNPAHEDR).

The protein belongs to the RxLR effector family.

The protein resides in the secreted. The protein localises to the host nucleus. Its subcellular location is the host cytoplasm. Its function is as follows. Effector that leads to host programmed cell death. This is RxLR effector protein PITG_10232 from Phytophthora infestans (strain T30-4) (Potato late blight agent).